The primary structure comprises 316 residues: Ribosomal RNA small subunit methyltransferase H (316 aa).

Residues 32–34 (AGH), aspartate 52, phenylalanine 79, aspartate 106, and glutamine 113 contribute to the S-adenosyl-L-methionine site.

It belongs to the methyltransferase superfamily. RsmH family.

It is found in the cytoplasm. The catalysed reaction is cytidine(1402) in 16S rRNA + S-adenosyl-L-methionine = N(4)-methylcytidine(1402) in 16S rRNA + S-adenosyl-L-homocysteine + H(+). Specifically methylates the N4 position of cytidine in position 1402 (C1402) of 16S rRNA. This is Ribosomal RNA small subunit methyltransferase H from Paenibacillus sp. (strain JDR-2).